The chain runs to 59 residues: Large ribosomal subunit protein bL32 (59 aa).

Positions 1 to 24 are disordered; it reads MAVQQNKKSPSKRGMHRSHDFLTS.

It belongs to the bacterial ribosomal protein bL32 family.

This is Large ribosomal subunit protein bL32 from Ralstonia nicotianae (strain ATCC BAA-1114 / GMI1000) (Ralstonia solanacearum).